The chain runs to 828 residues: Periplasmic nitrate reductase (828 aa).

Residues 1 to 32 constitute a signal peptide (tat-type signal); the sequence is MNLSRRDFMKTNAAVAAAAVAGLAIPVKNVEA. Positions 38–94 constitute a 4Fe-4S Mo/W bis-MGD-type domain; that stretch reads IKWDKAPCRFCGTGCSVLVGTQNGRVVASQGDPDADVNRGLNCIKGYFLPKIMYGKD. 4 residues coordinate [4Fe-4S] cluster: Cys-45, Cys-48, Cys-52, and Cys-80. Mo-bis(molybdopterin guanine dinucleotide)-binding positions include Lys-82, Gln-149, Asn-174, Cys-178, 211–218, 242–246, 261–263, Met-372, Gln-376, Asn-482, 508–509, Lys-531, Asp-558, and 718–727; these read WGSNMAEM, STFEH, QSD, SD, and TGRVLEHWHT. A substrate-binding site is contributed by Phe-794. Mo-bis(molybdopterin guanine dinucleotide)-binding residues include Asn-802 and Lys-819.

Belongs to the prokaryotic molybdopterin-containing oxidoreductase family. NasA/NapA/NarB subfamily. In terms of assembly, component of the periplasmic nitrate reductase NapAB complex composed of NapA and NapB. Requires [4Fe-4S] cluster as cofactor. It depends on Mo-bis(molybdopterin guanine dinucleotide) as a cofactor. In terms of processing, predicted to be exported by the Tat system. The position of the signal peptide cleavage has not been experimentally proven.

It localises to the periplasm. The catalysed reaction is 2 Fe(II)-[cytochrome] + nitrate + 2 H(+) = 2 Fe(III)-[cytochrome] + nitrite + H2O. Catalytic subunit of the periplasmic nitrate reductase complex NapAB. Receives electrons from NapB and catalyzes the reduction of nitrate to nitrite. The protein is Periplasmic nitrate reductase of Pasteurella multocida (strain Pm70).